The sequence spans 1623 residues: Histone-lysine N-methyltransferase set-9 (1623 aa).

Disordered regions lie at residues 1 to 102 (MADG…APQQ), 112 to 131 (AADA…RPTE), 198 to 227 (EDAV…SVAS), 448 to 600 (QRPG…VLRP), and 645 to 781 (TGQS…DEAA). The segment covering 62–71 (HQMENQEFYH) has biased composition (basic and acidic residues). Low complexity predominate over residues 77-100 (EPQQIPQIPVFQPAAYNPPNYVAP). A compositionally biased stretch (polar residues) spans 206–227 (PGTQYRRNQQAGGGLPSTSVAS). Over residues 554–573 (MTQEEKNAHFARLTTDKEKP) the composition is skewed to basic and acidic residues. Residues 587-597 (PHVPPPPPPLV) are compositionally biased toward pro residues. Over residues 645–669 (TGQSGSSAAARQRTVSGSAARAQTY) the composition is skewed to polar residues. A compositionally biased stretch (basic residues) spans 723–733 (HRPRGRPKGTR). A compositionally biased stretch (acidic residues) spans 772–781 (SESEGIDEAA). Residues 786 to 834 (TMRCHCGMDHGDGDTIECEGCKTWQHMACMGLTLKSNTSKYKCEMCLPR) form a PHD-type zinc finger. Residues 857 to 895 (AARKQKRKSEPVEQKQKSSQPSTSRKSAPMALQQPAEPR) form a disordered region. The segment covering 873 to 882 (KSSQPSTSRK) has biased composition (polar residues). The SET domain occupies 965-1056 (MSSEVKRQPG…RNTEVTLPFD (92 aa)). Composition is skewed to basic and acidic residues over residues 1089-1157 (AERH…KKME) and 1172-1194 (AREE…EGKR). Disordered regions lie at residues 1089–1318 (AERH…NVAP) and 1356–1623 (LLAG…TRWN). Positions 1093–1201 (RAMDHKKQEA…GKRKEARRRS (109 aa)) form a coiled coil. Polar residues predominate over residues 1242–1252 (TTQPSTSSFAT). Low complexity predominate over residues 1282–1293 (ATTVATPKATTA). A coiled-coil region spans residues 1364–1401 (FSEVRAQIEEENRMKERSRKREAKKKAVEKEKKEHRKE). Basic and acidic residues-rich tracts occupy residues 1365 to 1378 (SEVR…NRMK), 1388 to 1406 (KKAV…KKTN), 1413 to 1429 (KSEK…EKKP), and 1447 to 1464 (KKTE…ESSS). Residues 1533 to 1544 (SSSNTAPTTTIA) are compositionally biased toward polar residues.

This sequence belongs to the class V-like SAM-binding methyltransferase superfamily. Predominantly expressed in the germline (at protein level).

Its subcellular location is the nucleus. The enzyme catalyses L-lysyl-[histone] + S-adenosyl-L-methionine = N(6)-methyl-L-lysyl-[histone] + S-adenosyl-L-homocysteine + H(+). Histone methyltransferase. Might play a role in transcriptional regulation. Together with set-26, negatively regulates lifespan in a germline-independent, partially daf-16-dependent fashion. Together with set-26, plays a role in germline development and maintenance and might play a role in the restriction of the trimethylation mark on histone H3 'Lys-4'(H3K4me3) to target genes specifically in the germline. This Caenorhabditis elegans protein is Histone-lysine N-methyltransferase set-9.